The sequence spans 385 residues: Effector protein hopAB3 (385 aa).

Disordered stretches follow at residues 1-61 (MVGI…AGRP), 73-139 (TREW…SPLY), and 215-293 (ADSQ…PRIN). The tract at residues 1–333 (MVGISGRAGP…INMEDLRAAL (333 aa)) is host recognition. Residues 217-234 (SQQAARAPARTPPRSSVR) are compositionally biased toward low complexity. 2 stretches are compositionally biased toward polar residues: residues 245 to 256 (ATESSSGSNQRS) and 265 to 283 (MTSN…TSQR).

The protein belongs to the HopAB family. As to quaternary structure, interacts physically with plant cell Pto.

The protein resides in the secreted. Its function is as follows. Effector protein involved in gene-for-gene resistance in tomato plants. It is recognized by the host Pto resistance protein and elicits Pto and Prf-dependent hypersensitive response (HR) and programmed cell death (PCD), resulting in host immunity. In susceptible plants, promotes virulence, in part, by enhancing the development of disease symptoms and bacterial growth. In Pseudomonas syringae pv. maculicola, this protein is Effector protein hopAB3 (hopAB3).